The primary structure comprises 440 residues: Signal recognition particle 54 kDa protein (440 aa).

Residues 104–111, 184–188, and 242–245 contribute to the GTP site; these read GLQGSGKT, DTAGR, and TKLD.

This sequence belongs to the GTP-binding SRP family. SRP54 subfamily. Part of the signal recognition particle protein translocation system, which is composed of SRP and FtsY. Archaeal SRP consists of a 7S RNA molecule of 300 nucleotides and two protein subunits: SRP54 and SRP19.

The protein localises to the cytoplasm. The enzyme catalyses GTP + H2O = GDP + phosphate + H(+). Its function is as follows. Involved in targeting and insertion of nascent membrane proteins into the cytoplasmic membrane. Binds to the hydrophobic signal sequence of the ribosome-nascent chain (RNC) as it emerges from the ribosomes. The SRP-RNC complex is then targeted to the cytoplasmic membrane where it interacts with the SRP receptor FtsY. This is Signal recognition particle 54 kDa protein from Methanosarcina acetivorans (strain ATCC 35395 / DSM 2834 / JCM 12185 / C2A).